Here is a 404-residue protein sequence, read N- to C-terminus: Putative aspartate aminotransferase, cytoplasmic 2 (404 aa).

Lys-249 carries the N6-(pyridoxal phosphate)lysine modification.

It belongs to the class-I pyridoxal-phosphate-dependent aminotransferase family. Homodimer. Pyridoxal 5'-phosphate serves as cofactor.

It localises to the cytoplasm. It carries out the reaction L-aspartate + 2-oxoglutarate = oxaloacetate + L-glutamate. This chain is Putative aspartate aminotransferase, cytoplasmic 2 (Got1l1), found in Mus musculus (Mouse).